The sequence spans 539 residues: Netrin-G1 (539 aa).

Residues 1 to 18 (MYLSRFLSIHALWVTVSS) form the signal peptide. Intrachain disulfides connect Cys33–Cys50, Cys72–Cys92, and Cys80–Cys88. One can recognise a Laminin N-terminal domain in the interval 46 to 296 (DYTACQPEST…AISDIKVRGR (251 aa)). The interval 80 to 91 (CAMGNPYMCNNE) is NGL discriminant loop I. An N-linked (GlcNAc...) asparagine glycan is attached at Asn133. A disulfide bridge links Cys182 with Cys206. Residues 208–214 (EEYSTGY) are NGL discriminant loop II. Positions 273–275 (EIF) are NGL discriminant loop III. 13 cysteine pairs are disulfide-bonded: Cys297/Cys306, Cys299/Cys315, Cys317/Cys326, Cys329/Cys354, Cys364/Cys373, Cys366/Cys384, Cys387/Cys396, Cys399/Cys417, Cys420/Cys432, Cys422/Cys438, Cys440/Cys449, Cys452/Cys462, and Cys488/Cys497. 3 consecutive Laminin EGF-like domains span residues 297–356 (CKCN…TCIP), 364–419 (CECF…VCIE), and 420–469 (CYCN…VCDN). A glycan (N-linked (GlcNAc...) asparagine) is linked at Asn320. Asn406 carries N-linked (GlcNAc...) asparagine glycosylation. Asn433 carries N-linked (GlcNAc...) asparagine glycosylation. Residue Ser510 is the site of GPI-anchor amidated serine attachment. The propeptide at 511–539 (ESGQGAPPRGSPALLLLTMLLGTAGPLVF) is removed in mature form.

Post-translationally, N-glycosylated. As to expression, expression is restricted primarily to neurons of the CNS, particularly in the dorsal thalamus, olfactory bulb and inferior colliculus. Isoform 1A and isoform 1D are the major products in adult brain.

It localises to the cell membrane. Its function is as follows. Involved in controlling patterning and neuronal circuit formation at the laminar, cellular, subcellular and synaptic levels. Promotes neurite outgrowth of both axons and dendrites. The polypeptide is Netrin-G1 (Ntng1) (Mus musculus (Mouse)).